Reading from the N-terminus, the 228-residue chain is MTRKIIAVIPASGVGSRMQAGLPKQYLKLQNKTILEHTLEIFLAHPDIEKIVVAVAETDPFYPQVALLDSPKIQIVFGGETRAHSVFNALQVIEDDSWVLVHDAARPCLKRSDLDKLLQIDDKQGAILATPAIDTMKRADGNKIMRTEDRSTLWHALTPQFFPTRLLKQALISAFKKNLTVTDEASAMEFSGYQPRLIAGRSDNLKITRPEDLALAEFYLTQNTEKKI.

It belongs to the IspD/TarI cytidylyltransferase family. IspD subfamily.

It catalyses the reaction 2-C-methyl-D-erythritol 4-phosphate + CTP + H(+) = 4-CDP-2-C-methyl-D-erythritol + diphosphate. The protein operates within isoprenoid biosynthesis; isopentenyl diphosphate biosynthesis via DXP pathway; isopentenyl diphosphate from 1-deoxy-D-xylulose 5-phosphate: step 2/6. Catalyzes the formation of 4-diphosphocytidyl-2-C-methyl-D-erythritol from CTP and 2-C-methyl-D-erythritol 4-phosphate (MEP). The chain is 2-C-methyl-D-erythritol 4-phosphate cytidylyltransferase from Actinobacillus pleuropneumoniae serotype 5b (strain L20).